Here is a 476-residue protein sequence, read N- to C-terminus: Doublesex and mab-3 related transcription factor 3 (476 aa).

The DM DNA-binding region spans 29–76 (CARCRNHGVLSWLKGHKRYCRFKDCTCEKCILIIERQRVMAAQVALRR). Disordered stretches follow at residues 89–130 (DSLR…RPAT) and 147–195 (GTLP…SKNC). Low complexity predominate over residues 102 to 121 (DAAATAATASQSSPASQASQ). A compositionally biased stretch (basic and acidic residues) spans 176 to 185 (FSDKDTDQRS). The region spanning 255–290 (RPPLEVLKKIFPNQKPTVLELILKGCGGDLVSAVEV) is the DMA domain. Residues 418–432 (NSTSVFRSSPVLSSR) show a composition bias toward polar residues. A disordered region spans residues 418–476 (NSTSVFRSSPVLSSRTTEDPRISIPDDGCPIVAKQSIYTEDDYDERSDSSDSRILNTSS).

The protein belongs to the DMRT family.

Its subcellular location is the nucleus. Its function is as follows. Probable transcription factor that plays a role in configuring the spinal circuits controlling stride in vertebrates. Involved in neuronal specification within a specific subdivision of spinal cord neurons and in the development of a coordinated locomotor network controlling limb movements. May regulate transcription during sexual development. The protein is Doublesex and mab-3 related transcription factor 3 (Dmrt3) of Rattus norvegicus (Rat).